Reading from the N-terminus, the 260-residue chain is HTH-type transcriptional repressor NanR (260 aa).

The disordered stretch occupies residues 1 to 21 (MSAFDHSSDDTQETIGNSLRR). Positions 27–95 (KKLSEMVEEE…NGERARVSRP (69 aa)) constitute an HTH gntR-type domain. Positions 55 to 74 (ERELMAFFNVGRPSVREALA) form a DNA-binding region, H-T-H motif.

Belongs to the NanR family.

Functionally, transcriptional repressor that controls expression of the genes required for the catabolism of sialic acids. In Klebsiella aerogenes (strain ATCC 13048 / DSM 30053 / CCUG 1429 / JCM 1235 / KCTC 2190 / NBRC 13534 / NCIMB 10102 / NCTC 10006 / CDC 819-56) (Enterobacter aerogenes), this protein is HTH-type transcriptional repressor NanR.